The primary structure comprises 308 residues: Cilia- and flagella-associated protein 73 (308 aa).

2 coiled-coil regions span residues 34–143 and 175–233; these read RLLE…LEPC and AALR…WESK.

The protein belongs to the CFAP73 family.

It localises to the cytoplasm. The protein localises to the cytoskeleton. It is found in the cilium axoneme. May play a role in ciliary/flagellar motility by regulating the assembly and the activity of axonemal inner dynein arm. This chain is Cilia- and flagella-associated protein 73, found in Homo sapiens (Human).